The primary structure comprises 236 residues: LexA repressor (236 aa).

Positions 1-25 are disordered; the sequence is MNDSNDTSVAGGAAGADSRVLSADS. The segment at residues 51–71 is a DNA-binding region (H-T-H motif); that stretch reads IREIGDAVGLTSTSSVAHQLR. Active-site for autocatalytic cleavage activity residues include Ser160 and Lys197.

This sequence belongs to the peptidase S24 family. As to quaternary structure, homodimer.

The enzyme catalyses Hydrolysis of Ala-|-Gly bond in repressor LexA.. Represses a number of genes involved in the response to DNA damage (SOS response), including recA and lexA. In the presence of single-stranded DNA, RecA interacts with LexA causing an autocatalytic cleavage which disrupts the DNA-binding part of LexA, leading to derepression of the SOS regulon and eventually DNA repair. The sequence is that of LexA repressor from Mycobacterium bovis (strain BCG / Pasteur 1173P2).